The following is a 441-amino-acid chain: L-seryl-tRNA(Sec) selenium transferase (441 aa).

Residue Lys283 is modified to N6-(pyridoxal phosphate)lysine.

This sequence belongs to the SelA family. The cofactor is pyridoxal 5'-phosphate.

Its subcellular location is the cytoplasm. The catalysed reaction is L-seryl-tRNA(Sec) + selenophosphate + H(+) = L-selenocysteinyl-tRNA(Sec) + phosphate. It participates in aminoacyl-tRNA biosynthesis; selenocysteinyl-tRNA(Sec) biosynthesis; selenocysteinyl-tRNA(Sec) from L-seryl-tRNA(Sec) (bacterial route): step 1/1. Functionally, converts seryl-tRNA(Sec) to selenocysteinyl-tRNA(Sec) required for selenoprotein biosynthesis. The sequence is that of L-seryl-tRNA(Sec) selenium transferase from Campylobacter concisus (strain 13826).